Here is a 570-residue protein sequence, read N- to C-terminus: Urease subunit alpha (570 aa).

The region spanning 131–570 (GGMDSHIHFI…LPMAQRYFLF (440 aa)) is the Urease domain. Residues His-136, His-138, and Lys-219 each coordinate Ni(2+). Lys-219 is modified (N6-carboxylysine). Residue His-221 coordinates substrate. Residues His-248 and His-274 each contribute to the Ni(2+) site. The active-site Proton donor is His-322. Asp-362 lines the Ni(2+) pocket.

The protein belongs to the metallo-dependent hydrolases superfamily. Urease alpha subunit family. As to quaternary structure, heterotrimer of UreA (gamma), UreB (beta) and UreC (alpha) subunits. Three heterotrimers associate to form the active enzyme. Requires Ni cation as cofactor. Carboxylation allows a single lysine to coordinate two nickel ions.

It localises to the cytoplasm. It carries out the reaction urea + 2 H2O + H(+) = hydrogencarbonate + 2 NH4(+). The protein operates within nitrogen metabolism; urea degradation; CO(2) and NH(3) from urea (urease route): step 1/1. The sequence is that of Urease subunit alpha from Rhizobium johnstonii (strain DSM 114642 / LMG 32736 / 3841) (Rhizobium leguminosarum bv. viciae).